The primary structure comprises 348 residues: Propane 2-monooxygenase, reductase component (348 aa).

Positions 5–95 (HKINFEPVDI…DCTIELLNFD (91 aa)) constitute a 2Fe-2S ferredoxin-type domain. [2Fe-2S] cluster-binding residues include Cys39, Cys44, Cys47, and Cys79. In terms of domain architecture, FAD-binding FR-type spans 105-206 (IQDVRTEVLA…TGPYGSFTLK (102 aa)).

It belongs to the bacterial ring-hydroxylating dioxygenase ferredoxin reductase family. In terms of assembly, the propane 2-monooxygenase multicomponent enzyme system is composed of an electron transfer component and a monooxygenase component interacting with the effector protein MimD. The electron transfer component is composed of a reductase (MimB), and the monooxygenase component is formed by a large subunit (MimA) and a small subunit (MimC). Requires FAD as cofactor. [2Fe-2S] cluster is required as a cofactor.

In terms of biological role, reductase component of the propane 2-monooxygenase multicomponent enzyme system which is involved in the degradation of propane via the O2-dependent hydroxylation of propane. Reductase catalyzes the transfer of electrons from NADH or NADPH to monooxygenase. The sequence is that of Propane 2-monooxygenase, reductase component from Mycolicibacterium goodii (Mycobacterium goodii).